Consider the following 466-residue polypeptide: Light-independent protochlorophyllide reductase subunit N (466 aa).

3 residues coordinate [4Fe-4S] cluster: cysteine 24, cysteine 49, and cysteine 109.

It belongs to the BchN/ChlN family. Protochlorophyllide reductase is composed of three subunits; ChlL, ChlN and ChlB. Forms a heterotetramer of two ChlB and two ChlN subunits. It depends on [4Fe-4S] cluster as a cofactor.

The enzyme catalyses chlorophyllide a + oxidized 2[4Fe-4S]-[ferredoxin] + 2 ADP + 2 phosphate = protochlorophyllide a + reduced 2[4Fe-4S]-[ferredoxin] + 2 ATP + 2 H2O. The protein operates within porphyrin-containing compound metabolism; chlorophyll biosynthesis (light-independent). Component of the dark-operative protochlorophyllide reductase (DPOR) that uses Mg-ATP and reduced ferredoxin to reduce ring D of protochlorophyllide (Pchlide) to form chlorophyllide a (Chlide). This reaction is light-independent. The NB-protein (ChlN-ChlB) is the catalytic component of the complex. In Synechococcus sp. (strain JA-3-3Ab) (Cyanobacteria bacterium Yellowstone A-Prime), this protein is Light-independent protochlorophyllide reductase subunit N.